Reading from the N-terminus, the 686-residue chain is Translation initiation factor IF-2 (686 aa).

The tract at residues 53–105 is disordered; sequence EKPSVADEFEVEEKVVRSKKNSNKKKKKGKGNEDKRQENFAGRQQTQTVETPD. The span at 69–81 shows a compositional bias: basic residues; it reads RSKKNSNKKKKKG. A tr-type G domain is found at 188–357; the sequence is ERPAVVTIMG…LLVSEVEEYK (170 aa). The tract at residues 197-204 is G1; sequence GHVDHGKT. 197-204 contacts GTP; sequence GHVDHGKT. Residues 222–226 form a G2 region; it reads GITQH. The interval 243–246 is G3; sequence DTPG. GTP is bound by residues 243–247 and 297–300; these read DTPGH and NKMD. Residues 297-300 form a G4 region; that stretch reads NKMD. Positions 333 to 335 are G5; the sequence is SAI.

Belongs to the TRAFAC class translation factor GTPase superfamily. Classic translation factor GTPase family. IF-2 subfamily.

The protein localises to the cytoplasm. Its function is as follows. One of the essential components for the initiation of protein synthesis. Protects formylmethionyl-tRNA from spontaneous hydrolysis and promotes its binding to the 30S ribosomal subunits. Also involved in the hydrolysis of GTP during the formation of the 70S ribosomal complex. The sequence is that of Translation initiation factor IF-2 from Bacillus cereus (strain ATCC 10987 / NRS 248).